A 629-amino-acid chain; its full sequence is tRNA uridine 5-carboxymethylaminomethyl modification enzyme MnmG (629 aa).

Residues 13-18, Val-125, and Ser-180 each bind FAD; that span reads GGGHAG. An NAD(+)-binding site is contributed by 273–287; the sequence is GPRYCPSIEDKVMRF. An FAD-binding site is contributed by Gln-370.

It belongs to the MnmG family. In terms of assembly, homodimer. Heterotetramer of two MnmE and two MnmG subunits. It depends on FAD as a cofactor.

Its subcellular location is the cytoplasm. Its function is as follows. NAD-binding protein involved in the addition of a carboxymethylaminomethyl (cmnm) group at the wobble position (U34) of certain tRNAs, forming tRNA-cmnm(5)s(2)U34. The sequence is that of tRNA uridine 5-carboxymethylaminomethyl modification enzyme MnmG from Sodalis glossinidius (strain morsitans).